Consider the following 232-residue polypeptide: Clarin-1 (232 aa).

The chain crosses the membrane as a helical span at residues 8–28; it reads IIFCMAGVFSFACALGVVTAL. An N-linked (GlcNAc...) asparagine glycan is attached at asparagine 48. The next 3 helical transmembrane spans lie at 101-121, 135-155, and 186-206; these read VILF…FFMY, LGLY…MILF, and TTSF…GLLI.

Belongs to the clarin family. Widely expressed. Found in the retina.

It localises to the cell membrane. May have a role in the excitatory ribbon synapse junctions between hair cells and cochlear ganglion cells and presumably also in analogous synapses within the retina. This is Clarin-1 (CLRN1) from Homo sapiens (Human).